The primary structure comprises 268 residues: Malonyl-[acyl-carrier protein] O-methyltransferase (268 aa).

Belongs to the methyltransferase superfamily.

The enzyme catalyses malonyl-[ACP] + S-adenosyl-L-methionine = malonyl-[ACP] methyl ester + S-adenosyl-L-homocysteine. Its pathway is cofactor biosynthesis; biotin biosynthesis. Functionally, converts the free carboxyl group of a malonyl-thioester to its methyl ester by transfer of a methyl group from S-adenosyl-L-methionine (SAM). It allows to synthesize pimeloyl-ACP via the fatty acid synthetic pathway. The sequence is that of Malonyl-[acyl-carrier protein] O-methyltransferase from Prosthecochloris aestuarii (strain DSM 271 / SK 413).